Consider the following 247-residue polypeptide: Oil body-associated protein 2A (247 aa).

A disordered region spans residues 1–26 (MASSDERPGAYPARDGSENLPPGDPK).

Belongs to the OBAP family.

This chain is Oil body-associated protein 2A, found in Arabidopsis thaliana (Mouse-ear cress).